Consider the following 308-residue polypeptide: Glucan 1,3-beta-glucosidase ARB_02797 (308 aa).

An N-terminal signal peptide occupies residues 1–20 (MRFSTALSLALAVSPAAVFA). Glutamate 120 serves as the catalytic Proton donor. Residue asparagine 126 is glycosylated (N-linked (GlcNAc...) asparagine). The active-site Nucleophile is glutamate 220.

Belongs to the glycosyl hydrolase 17 family.

It localises to the secreted. The protein localises to the cell wall. It is found in the cytoplasm. It catalyses the reaction Successive hydrolysis of beta-D-glucose units from the non-reducing ends of (1-&gt;3)-beta-D-glucans, releasing alpha-glucose.. Cell wall glucan 1,3-beta-glucosidase involved in cell wall biosynthesis and virulence. Crucial for delivery of beta-1,3-glucan to the biofilm matrix and for accumulation of mature matrix biomass. In Arthroderma benhamiae (strain ATCC MYA-4681 / CBS 112371) (Trichophyton mentagrophytes), this protein is Glucan 1,3-beta-glucosidase ARB_02797.